The sequence spans 154 residues: Ribonuclease H (154 aa).

The RNase H type-1 domain occupies 9–150 (SHPHIIIYTD…ADALANKGVE (142 aa)). Residues D18, E56, D78, and D142 each coordinate Mg(2+).

Belongs to the RNase H family. In terms of assembly, monomer. Mg(2+) is required as a cofactor.

It localises to the cytoplasm. It carries out the reaction Endonucleolytic cleavage to 5'-phosphomonoester.. Functionally, endonuclease that specifically degrades the RNA of RNA-DNA hybrids. The chain is Ribonuclease H from Polynucleobacter asymbioticus (strain DSM 18221 / CIP 109841 / QLW-P1DMWA-1) (Polynucleobacter necessarius subsp. asymbioticus).